Here is a 441-residue protein sequence, read N- to C-terminus: Baicalein 7-O-glucuronosyltransferase (441 aa).

This sequence belongs to the UDP-glycosyltransferase family. In terms of assembly, homodimer.

The enzyme catalyses baicalein + UDP-alpha-D-glucuronate = baicalin + UDP. Its activity is regulated as follows. Inhibited by copper, zinc and iron, p-Chloromercuri-benzoic acid (PCMBA) and 4,4'-diisothiocyanostilbene-2,2'-disulfonic acid (DIDS), but not by N-ethylmaleimide (NEM), dithioerythritol (DTE), calcium or magnesium. Its function is as follows. Involved in the production of glucuronosylated baicalein, a flavonoid that shows antiallergic, anti-HIV and antitumor activities. Can use baicalein, scutellarein and wogonin as substrates, but not chrysin, apigenin, luteolin, quercetin, formononetin and daidzein. Highly specific for UDP-glucuronate (UDP-GlcUA) and no activity with UDP-glucose or UDP-galacturonic acid. In Scutellaria baicalensis (Baical skullcap), this protein is Baicalein 7-O-glucuronosyltransferase (UBGAT-I).